The primary structure comprises 64 residues: Copper-specific metallothionein-2 (64 aa).

Residues Cys3, Cys5, Cys9, Cys11, Cys16, Cys18, Cys22, Cys24, Cys27, Cys33, Cys40, Cys44, Cys50, Cys52, Cys56, and Cys58 each contribute to the Cu(+) site.

Belongs to the metallothionein superfamily. Type 2 family.

The metallothioneins are involved in the cellular sequestration of toxic metal ions and regulation of essential trace elements. This isoform binds exclusively copper. This is Copper-specific metallothionein-2 from Callinectes sapidus (Blue crab).